Consider the following 419-residue polypeptide: UDP-N-acetylglucosamine 1-carboxyvinyltransferase 2 (419 aa).

22-23 (KN) is a binding site for phosphoenolpyruvate. Arginine 92 provides a ligand contact to UDP-N-acetyl-alpha-D-glucosamine. Cysteine 116 serves as the catalytic Proton donor. Cysteine 116 is subject to 2-(S-cysteinyl)pyruvic acid O-phosphothioketal. Residues 121 to 125 (RPIDL), aspartate 306, and isoleucine 328 contribute to the UDP-N-acetyl-alpha-D-glucosamine site.

Belongs to the EPSP synthase family. MurA subfamily.

It localises to the cytoplasm. It carries out the reaction phosphoenolpyruvate + UDP-N-acetyl-alpha-D-glucosamine = UDP-N-acetyl-3-O-(1-carboxyvinyl)-alpha-D-glucosamine + phosphate. Its pathway is cell wall biogenesis; peptidoglycan biosynthesis. Functionally, cell wall formation. Adds enolpyruvyl to UDP-N-acetylglucosamine. This chain is UDP-N-acetylglucosamine 1-carboxyvinyltransferase 2, found in Streptococcus pyogenes serotype M3 (strain ATCC BAA-595 / MGAS315).